The following is a 663-amino-acid chain: Transketolase 2 (663 aa).

Histidine 25 contributes to the substrate binding site. Thiamine diphosphate contacts are provided by residues histidine 65 and 113–115 (GPL). Aspartate 154 is a binding site for Mg(2+). Glycine 155 and asparagine 184 together coordinate thiamine diphosphate. Residues asparagine 184 and isoleucine 186 each contribute to the Mg(2+) site. 3 residues coordinate substrate: histidine 259, arginine 356, and serine 383. Histidine 259 is a binding site for thiamine diphosphate. The active-site Proton donor is the glutamate 410. Residue phenylalanine 436 participates in thiamine diphosphate binding. Substrate-binding residues include histidine 460, aspartate 468, and arginine 519.

Belongs to the transketolase family. As to quaternary structure, homodimer. The cofactor is Mg(2+). Ca(2+) is required as a cofactor. It depends on Mn(2+) as a cofactor. Requires Co(2+) as cofactor. Thiamine diphosphate serves as cofactor.

The enzyme catalyses D-sedoheptulose 7-phosphate + D-glyceraldehyde 3-phosphate = aldehydo-D-ribose 5-phosphate + D-xylulose 5-phosphate. Catalyzes the transfer of a two-carbon ketol group from a ketose donor to an aldose acceptor, via a covalent intermediate with the cofactor thiamine pyrophosphate. The sequence is that of Transketolase 2 (tkt2) from Aliivibrio fischeri (strain ATCC 700601 / ES114) (Vibrio fischeri).